A 347-amino-acid polypeptide reads, in one-letter code: Protein RecA (347 aa).

66–73 (GPESSGKT) contributes to the ATP binding site.

Belongs to the RecA family.

The protein resides in the cytoplasm. In terms of biological role, can catalyze the hydrolysis of ATP in the presence of single-stranded DNA, the ATP-dependent uptake of single-stranded DNA by duplex DNA, and the ATP-dependent hybridization of homologous single-stranded DNAs. It interacts with LexA causing its activation and leading to its autocatalytic cleavage. In Allochromatium vinosum (Chromatium vinosum), this protein is Protein RecA.